Here is a 274-residue protein sequence, read N- to C-terminus: NADPH-dependent 7-cyano-7-deazaguanine reductase (274 aa).

The segment at 1–33 (MPKKDALDHLSLGQHTDYPNEYDPKQLQPVPRS) is disordered. 84–86 (IES) lines the substrate pocket. 86–87 (SK) contacts NADPH. Residue C183 is the Thioimide intermediate of the active site. Catalysis depends on D190, which acts as the Proton donor. 222 to 223 (HE) is a binding site for substrate. 250 to 251 (RG) provides a ligand contact to NADPH.

Belongs to the GTP cyclohydrolase I family. QueF type 2 subfamily. In terms of assembly, homodimer.

It is found in the cytoplasm. The catalysed reaction is 7-aminomethyl-7-carbaguanine + 2 NADP(+) = 7-cyano-7-deazaguanine + 2 NADPH + 3 H(+). It functions in the pathway tRNA modification; tRNA-queuosine biosynthesis. Functionally, catalyzes the NADPH-dependent reduction of 7-cyano-7-deazaguanine (preQ0) to 7-aminomethyl-7-deazaguanine (preQ1). The protein is NADPH-dependent 7-cyano-7-deazaguanine reductase of Idiomarina loihiensis (strain ATCC BAA-735 / DSM 15497 / L2-TR).